A 55-amino-acid chain; its full sequence is UPF0391 membrane protein Tbd_2772 (55 aa).

The next 2 membrane-spanning stretches (helical) occupy residues 1-21 (MFGW…FGFA) and 28-48 (AWIA…MLVM).

The protein belongs to the UPF0391 family.

Its subcellular location is the cell membrane. This Thiobacillus denitrificans (strain ATCC 25259 / T1) protein is UPF0391 membrane protein Tbd_2772.